Here is a 398-residue protein sequence, read N- to C-terminus: Pentalenolactone synthase (398 aa).

Residue C347 coordinates heme.

This sequence belongs to the cytochrome P450 family. Requires heme as cofactor.

The enzyme catalyses pentalenolactone F + 2 reduced [2Fe-2S]-[ferredoxin] + O2 + 2 H(+) = pentalenolactone + 2 oxidized [2Fe-2S]-[ferredoxin] + 2 H2O. It participates in antibiotic biosynthesis; pentalenolactone biosynthesis. In terms of biological role, catalyzes the final step in the biosynthesis of the sesquiterpenoid antibiotic pentalenolactone by mediating the oxidative rearrangement of pentalenolactone F to pentalenolactone. The chain is Pentalenolactone synthase (penM) from Streptomyces exfoliatus (Streptomyces hydrogenans).